Consider the following 131-residue polypeptide: Glycine cleavage system H protein (131 aa).

In terms of domain architecture, Lipoyl-binding spans 24–106; the sequence is RVTVGISDHA…YGEGWIFVVE (83 aa). N6-lipoyllysine is present on lysine 65.

It belongs to the GcvH family. The glycine cleavage system is composed of four proteins: P, T, L and H. (R)-lipoate serves as cofactor.

Functionally, the glycine cleavage system catalyzes the degradation of glycine. The H protein shuttles the methylamine group of glycine from the P protein to the T protein. The polypeptide is Glycine cleavage system H protein (Xanthomonas oryzae pv. oryzae (strain MAFF 311018)).